The following is an 891-amino-acid chain: Translation initiation factor IF-2 (891 aa).

In terms of domain architecture, tr-type G spans 390-559 (NRAPIVTIMG…LLQSDMLELK (170 aa)). Residues 399-406 (GHVDHGKT) are G1. 399–406 (GHVDHGKT) provides a ligand contact to GTP. The G2 stretch occupies residues 424 to 428 (GITQS). The G3 stretch occupies residues 445 to 448 (DTPG). Residues 445–449 (DTPGH) and 499–502 (NKID) contribute to the GTP site. Residues 499–502 (NKID) form a G4 region. Positions 535–537 (SAT) are G5.

This sequence belongs to the TRAFAC class translation factor GTPase superfamily. Classic translation factor GTPase family. IF-2 subfamily.

The protein resides in the cytoplasm. One of the essential components for the initiation of protein synthesis. Protects formylmethionyl-tRNA from spontaneous hydrolysis and promotes its binding to the 30S ribosomal subunits. Also involved in the hydrolysis of GTP during the formation of the 70S ribosomal complex. The polypeptide is Translation initiation factor IF-2 (Blochmanniella pennsylvanica (strain BPEN)).